The following is an 881-amino-acid chain: Plakophilin-2 (881 aa).

The tract at residues 1 to 348 is required for interaction with influenza A virus RNA polymerase subunit PB1; the sequence is MAAPGAPAEY…FTDSQLGNAD (348 aa). Residues 1-360 form a required for binding to single-stranded DNA region; it reads MAAPGAPAEY…MTLERAVSML (360 aa). Phosphoserine is present on Ser-44. Arg-46 carries the post-translational modification Omega-N-methylarginine. Position 82 is a phosphoserine; by MARK3 (Ser-82). Ser-132, Ser-135, Ser-151, Ser-154, Ser-155, Ser-169, and Ser-172 each carry phosphoserine. Position 177 is a phosphothreonine (Thr-177). Phosphoserine is present on residues Ser-183, Ser-197, Ser-251, Ser-294, and Ser-329. Residues 282-314 form a disordered region; that stretch reads QNRASRSSWHQSSFHSTRTLREAGPSVAVDSSG. Residues 286-297 show a composition bias toward low complexity; sequence SRSSWHQSSFHS. 8 ARM repeats span residues 341 to 383, 385 to 424, 427 to 467, 571 to 616, 671 to 711, 719 to 758, 763 to 804, and 807 to 849; these read DSQL…ECFQ, SEARKRVNQLRGILKLLQLLKVQNEDVQRAVCGALRNLVF, NDNK…NLRS, DGRK…NLSY, PKGV…NLTA, SVAQTVVQKESGLQHTRKMLHVGDPSVKKTAISLLRNLSR, QNEI…NIIQ, and YQNA…SLWA.

The protein belongs to the beta-catenin family. In terms of assembly, interacts with DSC2. Interacts with JUP. Interacts with KRT5/CK5, KRT8/CK8, KRT14/CK14, KRT18/CK18 and VIM. Interacts (via N-terminus) with MARK3/C-TAK1. Interacts with DSP. Interacts with DSG1, DSG2 and DSG3. Interacts (via N-terminus) with CTNNB1. Interacts with CDH1. Interacts with the RNA polymerase III (Pol III) complex proteins POLR3A/RPC155, POLR3F/RPC39 and POLR3C/RPC82. Interacts with CTNNA3. Interacts (via N-terminus) with SCN5A/Nav1.5. Interacts with ANK3/ANKG and GJA1/CX43. As to quaternary structure, (Microbial infection) Interacts (via N-terminus) with influenza A virus RNA polymerase subunit PB1 (via C-terminus); the interaction competitively inhibits the interaction between the subunits PB1 and PB2. In terms of tissue distribution, expressed at intercalated disks in the heart (at protein level). Expressed in gingival epithelial, endothelial and fibroblast cells (at protein level). Faintly expressed in tracheal epithelial cells (at protein level). Widely expressed. Found at desmosomal plaques in simple and stratified epithelia and in non-epithelial tissues such as myocardium and lymph node follicles. In most stratified epithelia found in the desmosomes of the basal cell layer and seems to be absent from suprabasal strata. (Microbial infection) Abundantly expressed in tracheal epithelial cells following influenza A virus infection (at protein level).

The protein localises to the nucleus. The protein resides in the cell junction. It localises to the desmosome. It is found in the cytoplasm. Its function is as follows. A component of desmosome cell-cell junctions which are required for positive regulation of cellular adhesion. Regulates focal adhesion turnover resulting in changes in focal adhesion size, cell adhesion and cell spreading, potentially via transcriptional modulation of beta-integrins. Required to maintain gingival epithelial barrier function. Important component of the desmosome that is also required for localization of desmosome component proteins such as DSC2, DSG2 and JUP to the desmosome cell-cell junction. Required for the formation of desmosome cell junctions in cardiomyocytes, thereby required for the correct formation of the heart, specifically trabeculation and formation of the atria walls. Loss of desmosome cell junctions leads to mis-localization of DSP and DSG2 resulting in disruption of cell-cell adhesion and disordered intermediate filaments. Modulates profibrotic gene expression in cardiomyocytes via regulation of DSP expression and subsequent activation of downstream TGFB1 and MAPK14/p38 MAPK signaling. Required for cardiac sodium current propagation and electrical synchrony in cardiac myocytes, via ANK3 stabilization and modulation of SCN5A/Nav1.5 localization to cell-cell junctions. Required for mitochondrial function, nuclear envelope integrity and positive regulation of SIRT3 transcription via maintaining DES localization at its nuclear envelope and cell tip anchoring points, and thereby preserving regulation of the transcriptional program. Maintenance of nuclear envelope integrity protects against DNA damage and transcriptional dysregulation of genes, especially those involved in the electron transport chain, thereby preserving mitochondrial function and protecting against superoxide radical anion generation. Binds single-stranded DNA (ssDNA). May regulate the localization of GJA1 to gap junctions in intercalated disks of the heart. Involved in the inhibition of viral infection by influenza A viruses (IAV). Acts as a host restriction factor for IAV viral propagation, potentially via disrupting the interaction of IAV polymerase complex proteins. This Homo sapiens (Human) protein is Plakophilin-2.